Here is a 337-residue protein sequence, read N- to C-terminus: Holliday junction branch migration complex subunit RuvB (337 aa).

The tract at residues 1 to 179 is large ATPase domain (RuvB-L); the sequence is MTHQVSVLHQ…FSFSGRVSYY (179 aa). Residues leucine 18, arginine 19, glycine 60, lysine 63, threonine 64, serine 65, 126 to 128, arginine 169, tyrosine 179, and arginine 216 each bind ATP; that span reads EDY. Mg(2+) is bound at residue threonine 64. The small ATPAse domain (RuvB-S) stretch occupies residues 180-250; the sequence is SDEDLATILK…VAEKALSMLL (71 aa). The segment at 253–337 is head domain (RuvB-H); it reads DWGLNEIDIK…DNLQILGEEK (85 aa). Residues lysine 308 and arginine 313 each contribute to the DNA site.

It belongs to the RuvB family. Homohexamer. Forms an RuvA(8)-RuvB(12)-Holliday junction (HJ) complex. HJ DNA is sandwiched between 2 RuvA tetramers; dsDNA enters through RuvA and exits via RuvB. An RuvB hexamer assembles on each DNA strand where it exits the tetramer. Each RuvB hexamer is contacted by two RuvA subunits (via domain III) on 2 adjacent RuvB subunits; this complex drives branch migration. In the full resolvosome a probable DNA-RuvA(4)-RuvB(12)-RuvC(2) complex forms which resolves the HJ.

It is found in the cytoplasm. It catalyses the reaction ATP + H2O = ADP + phosphate + H(+). Its function is as follows. The RuvA-RuvB-RuvC complex processes Holliday junction (HJ) DNA during genetic recombination and DNA repair, while the RuvA-RuvB complex plays an important role in the rescue of blocked DNA replication forks via replication fork reversal (RFR). RuvA specifically binds to HJ cruciform DNA, conferring on it an open structure. The RuvB hexamer acts as an ATP-dependent pump, pulling dsDNA into and through the RuvAB complex. RuvB forms 2 homohexamers on either side of HJ DNA bound by 1 or 2 RuvA tetramers; 4 subunits per hexamer contact DNA at a time. Coordinated motions by a converter formed by DNA-disengaged RuvB subunits stimulates ATP hydrolysis and nucleotide exchange. Immobilization of the converter enables RuvB to convert the ATP-contained energy into a lever motion, pulling 2 nucleotides of DNA out of the RuvA tetramer per ATP hydrolyzed, thus driving DNA branch migration. The RuvB motors rotate together with the DNA substrate, which together with the progressing nucleotide cycle form the mechanistic basis for DNA recombination by continuous HJ branch migration. Branch migration allows RuvC to scan DNA until it finds its consensus sequence, where it cleaves and resolves cruciform DNA. The polypeptide is Holliday junction branch migration complex subunit RuvB (Chlamydia felis (strain Fe/C-56) (Chlamydophila felis)).